The primary structure comprises 323 residues: ATP synthase gamma chain (323 aa).

This sequence belongs to the ATPase gamma chain family. In terms of assembly, F-type ATPases have 2 components, CF(1) - the catalytic core - and CF(0) - the membrane proton channel. CF(1) has five subunits: alpha(3), beta(3), gamma(1), delta(1), epsilon(1). CF(0) has three main subunits: a, b and c.

The protein resides in the cell inner membrane. In terms of biological role, produces ATP from ADP in the presence of a proton gradient across the membrane. The gamma chain is believed to be important in regulating ATPase activity and the flow of protons through the CF(0) complex. The sequence is that of ATP synthase gamma chain from Rickettsia peacockii (strain Rustic).